We begin with the raw amino-acid sequence, 777 residues long: Glucocorticoid receptor (777 aa).

Basic and acidic residues predominate over residues 1 to 14 (MDSKESLTPGREEN). A disordered region spans residues 1–23 (MDSKESLTPGREENPSSVLAQER). The tract at residues 1–420 (MDSKESLTPG…TATTGPPPKL (420 aa)) is modulating. T8 carries the post-translational modification Phosphothreonine. Position 23 is an omega-N-methylarginine (R23). S45, S113, S134, and S141 each carry phosphoserine. Over residues 130–140 (NRSTSVPENPK) the composition is skewed to polar residues. The disordered stretch occupies residues 130 to 183 (NRSTSVPENPKSSASTAVSAAPTEKEFPKTHSDISSEQQHLKGQTGTNGGNVKL). Over residues 141-150 (SSASTAVSAA) the composition is skewed to low complexity. The span at 152 to 163 (TEKEFPKTHSDI) shows a compositional bias: basic and acidic residues. Residues 164–174 (SSEQQHLKGQT) are compositionally biased toward polar residues. S203, S211, and S226 each carry phosphoserine. K258 is covalently cross-linked (Glycyl lysine isopeptide (Lys-Gly) (interchain with G-Cter in SUMO2)). Residue S267 is modified to Phosphoserine. Residues K277 and K293 each participate in a glycyl lysine isopeptide (Lys-Gly) (interchain with G-Cter in SUMO); alternate cross-link. Glycyl lysine isopeptide (Lys-Gly) (interchain with G-Cter in SUMO2); alternate cross-links involve residues K277 and K293. Residues 394-414 (SSPSMRPDVSSPPSSSSTATT) are compositionally biased toward low complexity. A disordered region spans residues 394 to 415 (SSPSMRPDVSSPPSSSSTATTG). S404 bears the Phosphoserine mark. K419 participates in a covalent cross-link: Glycyl lysine isopeptide (Lys-Gly) (interchain with G-Cter in ubiquitin). NR C4-type zinc fingers lie at residues 421–441 (CLVCSDEASGCHYGVLTCGSC) and 457–476 (CAGRNDCIIDKIRRKNCPAC). Positions 421-486 (CLVCSDEASG…RYRKCLQAGM (66 aa)) form a DNA-binding region, nuclear receptor. Residues K480, K492, K494, and K495 each carry the N6-acetyllysine modification. Positions 485 to 777 (GMNLEARKTK…NIKKLLFHQK (293 aa)) are interaction with CLOCK. Residues 487–523 (NLEARKTKKKIKGIQQATTGVSQETPENPANKTIVPA) form a hinge region. Residues 524 to 758 (TLPQLTPTLV…FPEMLAEIIT (235 aa)) form the NR LBD domain. An interaction with CRY1 region spans residues 532 to 697 (LVSLLEVIEP…EIRMTYIKEL (166 aa)). K703 is covalently cross-linked (Glycyl lysine isopeptide (Lys-Gly) (interchain with G-Cter in SUMO)).

This sequence belongs to the nuclear hormone receptor family. NR3 subfamily. In terms of assembly, heteromultimeric cytoplasmic complex with HSP90AA1, HSPA1A/HSPA1B, and FKBP5 or another immunophilin such as PPID, STIP1, or the immunophilin homolog PPP5C. Upon ligand binding FKBP5 dissociates from the complex and FKBP4 takes its place, thereby linking the complex to dynein and mediating transport to the nucleus, where the complex dissociates. Probably forms a complex composed of chaperones HSP90 and HSP70, co-chaperones CDC37, PPP5C, TSC1 and client protein TSC2, CDK4, AKT, RAF1 and NR3C1; this complex does not contain co-chaperones STIP1/HOP and PTGES3/p23. Directly interacts with UNC45A. Binds to DNA as a homodimer, and as heterodimer with NR3C2 or the retinoid X receptor. Binds STAT5A and STAT5B homodimers and heterodimers. Interacts with NRIP1, POU2F1, POU2F2 and TRIM28. Interacts with several coactivator complexes, including the SMARCA4 complex, CREBBP/EP300, TADA2L (Ada complex) and p160 coactivators such as NCOA2 and NCOA6. Interaction with BAG1 inhibits transactivation. Interacts with HEXIM1 and TGFB1I1. Interacts with NCOA1. Interacts with NCOA3, SMARCA4, SMARCC1, SMARCD1, and SMARCE1. Interacts with CLOCK, CRY1 and CRY2 in a ligand-dependent fashion. Interacts with CIART. Interacts with RWDD3. Interacts with UBE2I/UBC9 and this interaction is enhanced in the presence of RWDD3. Interacts with GRIP1. Interacts with NR4A3 (via nuclear receptor DNA-binding domain), represses transcription activity of NR4A3 on the POMC promoter Nur response element (NurRE). Directly interacts with PNRC2 to attract and form a complex with UPF1 and DCP1A; the interaction leads to rapid mRNA degradation. Interacts with GSK3B. Interacts with FNIP1 and FNIP2. Interacts (via C-terminus) with HNRNPU (via C-terminus). Interacts with MCM3AP. Interacts (via domain NR LBD) with HSP90AA1 and HSP90AB1. In the absence of hormonal ligand, interacts with TACC1. Interacts (via NR LBD domain) with ZNF764 (via KRAB domain); the interaction regulates transcription factor activity of NR3C1 by directing its actions toward certain biologic pathways. Post-translationally, acetylation by CLOCK reduces its binding to glucocorticoid response elements and its transcriptional activity. Increased proteasome-mediated degradation in response to glucocorticoids. In terms of processing, phosphorylated in the absence of hormone; becomes hyperphosphorylated in the presence of glucocorticoid. The Ser-203, Ser-226 and Ser-404-phosphorylated forms are mainly cytoplasmic, and the Ser-211-phosphorylated form is nuclear. Phosphorylation at Ser-211 increases transcriptional activity. Phosphorylation at Ser-203, Ser-226 and Ser-404 decreases signaling capacity. Phosphorylation at Ser-404 may protect from glucocorticoid-induced apoptosis. Phosphorylation at Ser-203 and Ser-211 is not required in regulation of chromosome segregation. May be dephosphorylated by PPP5C, attenuates NR3C1 action. Post-translationally, ubiquitinated by UBR5, leading to its degradation: UBR5 specifically recognizes and binds ligand-bound NR3C1 when it is not associated with coactivators (NCOAs). In presence of NCOAs, the UBR5-degron is not accessible, preventing its ubiquitination and degradation. Sumoylation at Lys-277 and Lys-293 negatively regulates its transcriptional activity. Sumoylation at Lys-703 positively regulates its transcriptional activity in the presence of RWDD3. Sumoylation at Lys-277 and Lys-293 is dispensable whereas sumoylation at Lys-703 is critical for the stimulatory effect of RWDD3 on its transcriptional activity. Heat shock increases sumoylation in a RWDD3-dependent manner.

The protein localises to the cytoplasm. The protein resides in the nucleus. It localises to the mitochondrion. It is found in the cytoskeleton. Its subcellular location is the spindle. The protein localises to the microtubule organizing center. The protein resides in the centrosome. It localises to the chromosome. It is found in the nucleoplasm. Functionally, receptor for glucocorticoids (GC). Has a dual mode of action: as a transcription factor that binds to glucocorticoid response elements (GRE), both for nuclear and mitochondrial DNA, and as a modulator of other transcription factors. Affects inflammatory responses, cellular proliferation and differentiation in target tissues. Involved in chromatin remodeling. Plays a role in rapid mRNA degradation by binding to the 5' UTR of target mRNAs and interacting with PNRC2 in a ligand-dependent manner which recruits the RNA helicase UPF1 and the mRNA-decapping enzyme DCP1A, leading to RNA decay. Could act as a coactivator for STAT5-dependent transcription upon growth hormone (GH) stimulation and could reveal an essential role of hepatic GR in the control of body growth. Mediates glucocorticoid-induced apoptosis. Promotes accurate chromosome segregation during mitosis. May act as a tumor suppressor. May play a negative role in adipogenesis through the regulation of lipolytic and antilipogenic gene expression. This Pongo abelii (Sumatran orangutan) protein is Glucocorticoid receptor (NR3C1).